A 462-amino-acid chain; its full sequence is ATP synthase subunit beta (462 aa).

151-158 (GGAGVGKT) is an ATP binding site.

Belongs to the ATPase alpha/beta chains family. As to quaternary structure, F-type ATPases have 2 components, CF(1) - the catalytic core - and CF(0) - the membrane proton channel. CF(1) has five subunits: alpha(3), beta(3), gamma(1), delta(1), epsilon(1). CF(0) has four main subunits: a(1), b(1), b'(1) and c(9-12).

It is found in the cell inner membrane. It carries out the reaction ATP + H2O + 4 H(+)(in) = ADP + phosphate + 5 H(+)(out). In terms of biological role, produces ATP from ADP in the presence of a proton gradient across the membrane. The catalytic sites are hosted primarily by the beta subunits. In Chlorobium limicola (strain DSM 245 / NBRC 103803 / 6330), this protein is ATP synthase subunit beta.